The following is a 103-amino-acid chain: Histone H4 (103 aa).

Residues 1–14 show a composition bias toward gly residues; sequence MSGRGKGGKGLGKG. A disordered region spans residues 1–20; it reads MSGRGKGGKGLGKGGAKRHR. An N-acetylserine modification is found at Ser2. N6-acetyl-N6-methyllysine; alternate is present on residues Lys6 and Lys13. Residues 17–21 mediate DNA binding; sequence KRHRK. The residue at position 21 (Lys21) is an N6-methyllysine.

The protein belongs to the histone H4 family. The nucleosome is a histone octamer containing two molecules each of H2A, H2B, H3 and H4 assembled in one H3-H4 heterotetramer and two H2A-H2B heterodimers. The octamer wraps approximately 147 bp of DNA.

It is found in the nucleus. The protein resides in the chromosome. Its function is as follows. Core component of nucleosome. Nucleosomes wrap and compact DNA into chromatin, limiting DNA accessibility to the cellular machineries which require DNA as a template. Histones thereby play a central role in transcription regulation, DNA repair, DNA replication and chromosomal stability. DNA accessibility is regulated via a complex set of post-translational modifications of histones, also called histone code, and nucleosome remodeling. The polypeptide is Histone H4 (Solaster stimpsoni (Striped sun sea star)).